Reading from the N-terminus, the 175-residue chain is Cuticle protein 16.5, isoform B (175 aa).

Repeat copies occupy residues 17 to 20 (AAPA), 25 to 28 (AAPA), 31 to 34 (AAPA), 38 to 41 (AAPA), 44 to 47 (AAPA), 51 to 54 (AAPA), 57 to 60 (AAPA), 64 to 67 (AAPA), 70 to 73 (AAPA), 77 to 80 (AAPA), 83 to 86 (AAPA), 91 to 94 (AAPA), 99 to 102 (AAPA), 106 to 109 (AAPA), 134 to 137 (AAPA), 144 to 147 (AAPA), 151 to 154 (AAPA), 158 to 161 (AAPA), and 165 to 168 (AAPA).

Functionally, component of the cuticle of migratory locust which contains more than 100 different structural proteins. This Locusta migratoria (Migratory locust) protein is Cuticle protein 16.5, isoform B.